The primary structure comprises 490 residues: Betaine aldehyde dehydrogenase (490 aa).

K(+)-binding residues include Thr26, Ile27, and Asp93. Gly150–Trp152 contributes to the NAD(+) binding site. Catalysis depends on Lys162, which acts as the Charge relay system. Residue Lys176–Glu179 participates in NAD(+) binding. Val180 is a K(+) binding site. Gly230–Ser233 is an NAD(+) binding site. Leu246 serves as a coordination point for K(+). Glu252 (proton acceptor) is an active-site residue. 3 residues coordinate NAD(+): Gly254, Cys286, and Glu387. Residue Cys286 is the Nucleophile of the active site. Residue Cys286 is modified to Cysteine sulfenic acid (-SOH). The K(+) site is built by Lys457 and Gly460. Glu464 acts as the Charge relay system in catalysis.

Belongs to the aldehyde dehydrogenase family. As to quaternary structure, dimer of dimers. K(+) serves as cofactor.

The enzyme catalyses betaine aldehyde + NAD(+) + H2O = glycine betaine + NADH + 2 H(+). It participates in amine and polyamine biosynthesis; betaine biosynthesis via choline pathway; betaine from betaine aldehyde: step 1/1. In terms of biological role, involved in the biosynthesis of the osmoprotectant glycine betaine. Catalyzes the irreversible oxidation of betaine aldehyde to the corresponding acid. This Klebsiella pneumoniae (strain 342) protein is Betaine aldehyde dehydrogenase.